A 113-amino-acid chain; its full sequence is MAGYRKLGLPTDQRRAMLRNLVTSLLKHGKIETTVTRAKETRSIAEKMITLGKRGDLHARRQALAFIQEELVVKNLFDNVAPKYAERNGGYTRMYKKGPRRGDGAEVVILELV.

It belongs to the bacterial ribosomal protein bL17 family. Part of the 50S ribosomal subunit. Contacts protein L32.

The polypeptide is Large ribosomal subunit protein bL17 (Clostridium botulinum (strain Alaska E43 / Type E3)).